Consider the following 371-residue polypeptide: Histidinol-phosphate aminotransferase (371 aa).

Lysine 222 is subject to N6-(pyridoxal phosphate)lysine.

Belongs to the class-II pyridoxal-phosphate-dependent aminotransferase family. Histidinol-phosphate aminotransferase subfamily. Homodimer. Pyridoxal 5'-phosphate is required as a cofactor.

The enzyme catalyses L-histidinol phosphate + 2-oxoglutarate = 3-(imidazol-4-yl)-2-oxopropyl phosphate + L-glutamate. It functions in the pathway amino-acid biosynthesis; L-histidine biosynthesis; L-histidine from 5-phospho-alpha-D-ribose 1-diphosphate: step 7/9. The polypeptide is Histidinol-phosphate aminotransferase (Anoxybacillus flavithermus (strain DSM 21510 / WK1)).